The chain runs to 89 residues: MEKYEKAAEIFKAFGDPTRLMILKLLAENGSMCVCKIIDELKKPQPTISHHLNILKKAGIVKARKEGTWNFYYIVDDRVKEIIKLVDEL.

In terms of domain architecture, HTH arsR-type spans 1 to 89; the sequence is MEKYEKAAEI…KEIIKLVDEL (89 aa).

This is an uncharacterized protein from Methanocaldococcus jannaschii (strain ATCC 43067 / DSM 2661 / JAL-1 / JCM 10045 / NBRC 100440) (Methanococcus jannaschii).